A 402-amino-acid chain; its full sequence is 4-hydroxy-3-methylbut-2-en-1-yl diphosphate synthase (ferredoxin) (402 aa).

4 residues coordinate [4Fe-4S] cluster: cysteine 311, cysteine 314, cysteine 345, and glutamate 352.

Belongs to the IspG family. Requires [4Fe-4S] cluster as cofactor.

It carries out the reaction (2E)-4-hydroxy-3-methylbut-2-enyl diphosphate + 2 oxidized [2Fe-2S]-[ferredoxin] + H2O = 2-C-methyl-D-erythritol 2,4-cyclic diphosphate + 2 reduced [2Fe-2S]-[ferredoxin] + H(+). It participates in isoprenoid biosynthesis; isopentenyl diphosphate biosynthesis via DXP pathway; isopentenyl diphosphate from 1-deoxy-D-xylulose 5-phosphate: step 5/6. Its function is as follows. Converts 2C-methyl-D-erythritol 2,4-cyclodiphosphate (ME-2,4cPP) into 1-hydroxy-2-methyl-2-(E)-butenyl 4-diphosphate, using ferredoxin I (PetF) as the reducing agent. The protein is 4-hydroxy-3-methylbut-2-en-1-yl diphosphate synthase (ferredoxin) of Thermosynechococcus vestitus (strain NIES-2133 / IAM M-273 / BP-1).